A 363-amino-acid chain; its full sequence is S-adenosylmethionine:tRNA ribosyltransferase-isomerase (363 aa).

This sequence belongs to the QueA family. In terms of assembly, monomer.

Its subcellular location is the cytoplasm. It catalyses the reaction 7-aminomethyl-7-carbaguanosine(34) in tRNA + S-adenosyl-L-methionine = epoxyqueuosine(34) in tRNA + adenine + L-methionine + 2 H(+). The protein operates within tRNA modification; tRNA-queuosine biosynthesis. Functionally, transfers and isomerizes the ribose moiety from AdoMet to the 7-aminomethyl group of 7-deazaguanine (preQ1-tRNA) to give epoxyqueuosine (oQ-tRNA). This chain is S-adenosylmethionine:tRNA ribosyltransferase-isomerase, found in Magnetococcus marinus (strain ATCC BAA-1437 / JCM 17883 / MC-1).